Reading from the N-terminus, the 1163-residue chain is Type IV pilus biogenesis factor PilY1 (1163 aa).

The first 30 residues, 1 to 30, serve as a signal peptide directing secretion; that stretch reads MKSALHQIGKTSLAAALSGAVLLSAQTTHA. The segment at 329–352 is disordered; that stretch reads SVGNADSTSRSLPDGKSYSSQTPY. Residues aspartate 600, aspartate 602, asparagine 604, and aspartate 608 each contribute to the Ca(2+) site. An integrin-binding motif RGD region spans residues 619–621; the sequence is RGD. Ca(2+) contacts are provided by aspartate 851, asparagine 853, aspartate 855, valine 857, and aspartate 859. Positions 1138–1163 are disordered; the sequence is SGECLTVNPGPNTRGRQNWRPIEGKN.

It belongs to the PilY1 family. As to quaternary structure, interacts (via C-terminal 532-1163) with host integrins alpha-V/beta-3 (ITGAV/ITGB3) and alpha-V/beta-5 (ITGAV/ITGB5).

Its subcellular location is the fimbrium. It is found in the membrane. The protein localises to the cytoplasm. It localises to the cytosol. Its function is as follows. Involved in pilus assembly, twitching motility and adhesion to host cells. Primes type IV pili (T4P) assembly and is required for inclusion of minor pilins PilV, PilW and PilX to the surface pili. Stabilizes assembled pilus fibers likely by antagonizing retraction mediated by PilT. Calcium-binding and calcium release by PilY1 seem to be essential for twitching motility and for regulation of pilus retraction dynamics of PilT. Adhesin for human tissue specifically recognizing a host receptor localized or enriched on basolateral epithelial cell surfaces. Binds host integrins in an calcium-dependent manner in vitro and this interaction may be employed by the bacterium to mediate host epithelial cell binding in vivo. The sequence is that of Type IV pilus biogenesis factor PilY1 from Pseudomonas aeruginosa (strain PAK).